A 170-amino-acid polypeptide reads, in one-letter code: 4-hydroxyphenylacetate 3-monooxygenase reductase component (170 aa).

This sequence belongs to the non-flavoprotein flavin reductase family. HpaC subfamily. As to quaternary structure, monomer. HPA 3-hydroxylase consists of a reductase component HpaC and an oxygenase component HpaB. Some form of interactions between the reductase and the oxygenase facilitate the transfer of FADH(-) to the oxygenase in P.aeruginosa, although interactions are not required in other species.

It carries out the reaction FADH2 + NAD(+) = FAD + NADH + 2 H(+). The protein operates within aromatic compound metabolism; 4-hydroxyphenylacetate degradation; pyruvate and succinate semialdehyde from 4-hydroxyphenylacetate: step 1/7. The rate of FAD reduction is independent of the presence of HPA, demonstrating that, in contrast to HPAH from A.baumannii, the activity of the HPAH reductase is not allosterically regulated by the substrate. In terms of biological role, reductase component of the 4-hydroxyphenylacetate (HPA) 3-hydroxylase. Catalyzes the reduction of FAD by NADH. The reduced flavin is then transferred to the oxygenase component HpaB. Is also able to reduce FMN and riboflavin, but preferentially binds FAD. Has no activity with NADPH as the reductant. This Pseudomonas aeruginosa (strain ATCC 15692 / DSM 22644 / CIP 104116 / JCM 14847 / LMG 12228 / 1C / PRS 101 / PAO1) protein is 4-hydroxyphenylacetate 3-monooxygenase reductase component.